The sequence spans 67 residues: Large ribosomal subunit protein uL29 (67 aa).

It belongs to the universal ribosomal protein uL29 family.

The sequence is that of Large ribosomal subunit protein uL29 from Exiguobacterium sibiricum (strain DSM 17290 / CCUG 55495 / CIP 109462 / JCM 13490 / 255-15).